We begin with the raw amino-acid sequence, 488 residues long: Pup--protein ligase (488 aa).

E33 contacts Mg(2+). R76 contributes to the ATP binding site. Y78 lines the Mg(2+) pocket. Residue D80 is the Proton acceptor of the active site. E86 lines the Mg(2+) pocket. 2 residues coordinate ATP: T89 and W453.

This sequence belongs to the Pup ligase/Pup deamidase family. Pup-conjugating enzyme subfamily.

It carries out the reaction ATP + [prokaryotic ubiquitin-like protein]-L-glutamate + [protein]-L-lysine = ADP + phosphate + N(6)-([prokaryotic ubiquitin-like protein]-gamma-L-glutamyl)-[protein]-L-lysine.. Its pathway is protein degradation; proteasomal Pup-dependent pathway. The protein operates within protein modification; protein pupylation. In terms of biological role, catalyzes the covalent attachment of the prokaryotic ubiquitin-like protein modifier Pup to the proteasomal substrate proteins, thereby targeting them for proteasomal degradation. This tagging system is termed pupylation. The ligation reaction involves the side-chain carboxylate of the C-terminal glutamate of Pup and the side-chain amino group of a substrate lysine. This is Pup--protein ligase from Bifidobacterium adolescentis (strain ATCC 15703 / DSM 20083 / NCTC 11814 / E194a).